Here is a 1485-residue protein sequence, read N- to C-terminus: Putative E3 ubiquitin-protein ligase LIN-2 (1485 aa).

A compositionally biased stretch (acidic residues) spans 337 to 353 (EENEDDSDSELDNESVD). 3 disordered regions span residues 337 to 363 (EENE…IFSP), 384 to 450 (NQIP…ISNA), and 462 to 507 (RKND…KLSM). Over residues 438–450 (SSPDISIDNISNA) the composition is skewed to low complexity. Polar residues predominate over residues 466 to 484 (SQTPSMNQDNENSLVLNDS). One can recognise a U-box domain in the interval 510–585 (KPPKDFVCPI…TSWKEQNPEL (76 aa)). WD repeat units follow at residues 1194 to 1232 (SCKE…KVCD), 1246 to 1283 (EHTK…IKCI), 1409 to 1448 (SLST…RVAS), and 1454 to 1485 (GHTK…WALD).

It catalyses the reaction S-ubiquitinyl-[E2 ubiquitin-conjugating enzyme]-L-cysteine + [acceptor protein]-L-lysine = [E2 ubiquitin-conjugating enzyme]-L-cysteine + N(6)-ubiquitinyl-[acceptor protein]-L-lysine.. The protein operates within protein modification; protein ubiquitination. Its function is as follows. Putative E3 ubiquitin-protein ligase involved in the rhizobial infection process. Plays an important role in the early steps of infection thread formation and in growth and differentiation of nodules. The protein is Putative E3 ubiquitin-protein ligase LIN-2 of Lotus japonicus (Lotus corniculatus var. japonicus).